Consider the following 129-residue polypeptide: Basic blue protein (129 aa).

The N-terminal stretch at 1 to 33 is a signal peptide; sequence MAKGRGSASWSARAIVTLMAVSVLLLQADYVQA. Residues 34-129 enclose the Phytocyanin domain; sequence ATYTVGDSGI…SDMKIAVTAV (96 aa). The Cu cation site is built by H72, C112, H117, and M122. C85 and C118 are joined by a disulfide.

As to expression, expressed in the inflorescence and in the transmitting tract of the pistil. Detected in roots, stems, cauline leaves, cotyledons, hypocotyls, guard cells, pistils, sepals, stamen filaments and vascular bundles of roots but not of leaves. Not expressed in petals, anthers or pollen.

It is found in the secreted. It localises to the extracellular space. The protein localises to the extracellular matrix. Forms a concentration gradient along the pollen tube growth path, with a lower level in the stigma papilla cell wall and a higher level in the transmitting tract extracellular matix of the style. The polypeptide is Basic blue protein (ARPN) (Arabidopsis thaliana (Mouse-ear cress)).